The following is a 405-amino-acid chain: Serpin I2 (405 aa).

The first 18 residues, methionine 1–alanine 18, serve as a signal peptide directing secretion. N-linked (GlcNAc...) asparagine glycosylation is found at asparagine 202, asparagine 207, and asparagine 306.

It belongs to the serpin family. In terms of tissue distribution, expressed in pancreas and adipose tissues.

The protein resides in the secreted. In Homo sapiens (Human), this protein is Serpin I2 (SERPINI2).